Here is an 860-residue protein sequence, read N- to C-terminus: DNA mismatch repair protein MutS (860 aa).

608–615 (GPNMAGKS) is a binding site for ATP.

Belongs to the DNA mismatch repair MutS family.

In terms of biological role, this protein is involved in the repair of mismatches in DNA. It is possible that it carries out the mismatch recognition step. This protein has a weak ATPase activity. This Borrelia turicatae (strain 91E135) protein is DNA mismatch repair protein MutS.